The chain runs to 404 residues: NADH-quinone oxidoreductase subunit D (404 aa).

Belongs to the complex I 49 kDa subunit family. NDH-1 is composed of 14 different subunits. Subunits NuoB, C, D, E, F, and G constitute the peripheral sector of the complex.

The protein resides in the cell inner membrane. It carries out the reaction a quinone + NADH + 5 H(+)(in) = a quinol + NAD(+) + 4 H(+)(out). Functionally, NDH-1 shuttles electrons from NADH, via FMN and iron-sulfur (Fe-S) centers, to quinones in the respiratory chain. The immediate electron acceptor for the enzyme in this species is believed to be ubiquinone. Couples the redox reaction to proton translocation (for every two electrons transferred, four hydrogen ions are translocated across the cytoplasmic membrane), and thus conserves the redox energy in a proton gradient. The sequence is that of NADH-quinone oxidoreductase subunit D from Dinoroseobacter shibae (strain DSM 16493 / NCIMB 14021 / DFL 12).